The following is a 403-amino-acid chain: Phosphoglycerate kinase (403 aa).

Substrate-binding positions include 21-23, Arg36, 59-62, Arg119, and Arg159; these read DFN and HLGR. Residues Lys214, Gly301, Glu332, and 359–362 contribute to the ATP site; that span reads GGDS.

Belongs to the phosphoglycerate kinase family. Monomer.

The protein localises to the cytoplasm. It carries out the reaction (2R)-3-phosphoglycerate + ATP = (2R)-3-phospho-glyceroyl phosphate + ADP. It functions in the pathway carbohydrate degradation; glycolysis; pyruvate from D-glyceraldehyde 3-phosphate: step 2/5. This chain is Phosphoglycerate kinase, found in Lactobacillus gasseri (strain ATCC 33323 / DSM 20243 / BCRC 14619 / CIP 102991 / JCM 1131 / KCTC 3163 / NCIMB 11718 / NCTC 13722 / AM63).